A 932-amino-acid chain; its full sequence is DNA mismatch repair protein MutS (932 aa).

620 to 627 (GPNMAGKS) lines the ATP pocket.

Belongs to the DNA mismatch repair MutS family.

Functionally, this protein is involved in the repair of mismatches in DNA. It is possible that it carries out the mismatch recognition step. This protein has a weak ATPase activity. The polypeptide is DNA mismatch repair protein MutS (Lachnoclostridium phytofermentans (strain ATCC 700394 / DSM 18823 / ISDg) (Clostridium phytofermentans)).